Reading from the N-terminus, the 182-residue chain is UPF0423 protein BRA0381/BS1330_II0378 (182 aa).

The signal sequence occupies residues 1–24; it reads MKNLFRTAALMVPLSLALAYGAQA.

Belongs to the UPF0423 family.

The polypeptide is UPF0423 protein BRA0381/BS1330_II0378 (Brucella suis biovar 1 (strain 1330)).